The sequence spans 427 residues: Protein king tubby 1 (427 aa).

Residues S48–D174 form a disordered region. Residues S57–P86 show a composition bias toward low complexity.

Belongs to the TUB family.

It is found in the cytoplasm. The protein localises to the nucleus. The polypeptide is Protein king tubby 1 (king-tubby1) (Culex quinquefasciatus (Southern house mosquito)).